The primary structure comprises 277 residues: NH(3)-dependent NAD(+) synthetase (277 aa).

36–43 (GLSGGIDS) is a binding site for ATP. Position 42 (aspartate 42) interacts with Mg(2+). Deamido-NAD(+) is bound at residue arginine 118. ATP is bound at residue threonine 138. Glutamate 143 contributes to the Mg(2+) binding site. ATP-binding residues include lysine 167 and serine 189.

This sequence belongs to the NAD synthetase family. As to quaternary structure, homodimer.

The catalysed reaction is deamido-NAD(+) + NH4(+) + ATP = AMP + diphosphate + NAD(+) + H(+). It functions in the pathway cofactor biosynthesis; NAD(+) biosynthesis; NAD(+) from deamido-NAD(+) (ammonia route): step 1/1. Functionally, catalyzes the ATP-dependent amidation of deamido-NAD to form NAD. Uses ammonia as a nitrogen source. The sequence is that of NH(3)-dependent NAD(+) synthetase from Chlorobium phaeovibrioides (strain DSM 265 / 1930) (Prosthecochloris vibrioformis (strain DSM 265)).